The primary structure comprises 477 residues: Bifunctional protein HldE (477 aa).

Residues 1–318 (MKVTLSEFER…ENAVRGRADT (318 aa)) form a ribokinase region. Residue Lys179 is modified to N6-acetyllysine. Position 195–198 (195–198 (NLSE)) interacts with ATP. Asp264 is an active-site residue. The tract at residues 344–477 (MTNGVFDILH…IKKIQQDKKG (134 aa)) is cytidylyltransferase.

It in the N-terminal section; belongs to the carbohydrate kinase PfkB family. This sequence in the C-terminal section; belongs to the cytidylyltransferase family. As to quaternary structure, homodimer.

It carries out the reaction D-glycero-beta-D-manno-heptose 7-phosphate + ATP = D-glycero-beta-D-manno-heptose 1,7-bisphosphate + ADP + H(+). The catalysed reaction is D-glycero-beta-D-manno-heptose 1-phosphate + ATP + H(+) = ADP-D-glycero-beta-D-manno-heptose + diphosphate. It functions in the pathway nucleotide-sugar biosynthesis; ADP-L-glycero-beta-D-manno-heptose biosynthesis; ADP-L-glycero-beta-D-manno-heptose from D-glycero-beta-D-manno-heptose 7-phosphate: step 1/4. It participates in nucleotide-sugar biosynthesis; ADP-L-glycero-beta-D-manno-heptose biosynthesis; ADP-L-glycero-beta-D-manno-heptose from D-glycero-beta-D-manno-heptose 7-phosphate: step 3/4. In terms of biological role, catalyzes the phosphorylation of D-glycero-D-manno-heptose 7-phosphate at the C-1 position to selectively form D-glycero-beta-D-manno-heptose-1,7-bisphosphate. Catalyzes the ADP transfer from ATP to D-glycero-beta-D-manno-heptose 1-phosphate, yielding ADP-D-glycero-beta-D-manno-heptose. This chain is Bifunctional protein HldE, found in Shigella boydii serotype 18 (strain CDC 3083-94 / BS512).